Consider the following 347-residue polypeptide: Anthranilate phosphoribosyltransferase (347 aa).

5-phospho-alpha-D-ribose 1-diphosphate is bound by residues Gly-88, 91 to 92 (GD), Thr-96, 98 to 101 (NIST), 116 to 124 (KHGGRSVSS), and Ser-128. Position 88 (Gly-88) interacts with anthranilate. A Mg(2+)-binding site is contributed by Ser-100. Residue Arg-174 participates in anthranilate binding. Residues Asp-233 and Glu-234 each contribute to the Mg(2+) site.

This sequence belongs to the anthranilate phosphoribosyltransferase family. In terms of assembly, homodimer. Mg(2+) serves as cofactor.

It catalyses the reaction N-(5-phospho-beta-D-ribosyl)anthranilate + diphosphate = 5-phospho-alpha-D-ribose 1-diphosphate + anthranilate. It functions in the pathway amino-acid biosynthesis; L-tryptophan biosynthesis; L-tryptophan from chorismate: step 2/5. Catalyzes the transfer of the phosphoribosyl group of 5-phosphorylribose-1-pyrophosphate (PRPP) to anthranilate to yield N-(5'-phosphoribosyl)-anthranilate (PRA). This is Anthranilate phosphoribosyltransferase from Polaromonas sp. (strain JS666 / ATCC BAA-500).